Consider the following 154-residue polypeptide: Transcriptional repressor NrdR (154 aa).

The segment at 3–34 is a zinc-finger region; it reads CPFCGAEDTAVADTRLNDEADVVRRRRKCNAC. Residues 49–139 enclose the ATP-cone domain; that stretch reads PQVVKKNGLR…VYRNFEDVDA (91 aa).

This sequence belongs to the NrdR family. Zn(2+) is required as a cofactor.

Negatively regulates transcription of bacterial ribonucleotide reductase nrd genes and operons by binding to NrdR-boxes. This chain is Transcriptional repressor NrdR, found in Dechloromonas aromatica (strain RCB).